Reading from the N-terminus, the 840-residue chain is Translation initiation factor IF-2 (840 aa).

Disordered regions lie at residues 94-157 (KRSP…AGAE) and 169-256 (PVAK…PTGP). Positions 95-143 (RSPDEIEAERQRELEEQRAAEEAERLKAEEAAARQRAEEEARKAEEAAR) are enriched in basic and acidic residues. Low complexity predominate over residues 144-157 (AKAAQEAAATAGAE). 2 stretches are compositionally biased toward basic and acidic residues: residues 175–191 (AVEE…PKRD) and 223–232 (STDEESDGYR). The span at 233-247 (RGGRGGKSKLKKRNQ) shows a compositional bias: basic residues. One can recognise a tr-type G domain in the interval 340–509 (TRAPVVTVMG…LLQAEVLELK (170 aa)). The tract at residues 349 to 356 (GHVDHGKT) is G1. 349 to 356 (GHVDHGKT) contributes to the GTP binding site. The interval 374–378 (GITQH) is G2. The tract at residues 395 to 398 (DTPG) is G3. Residues 395–399 (DTPGH) and 449–452 (NKID) contribute to the GTP site. The interval 449–452 (NKID) is G4. The tract at residues 485-487 (SAK) is G5.

It belongs to the TRAFAC class translation factor GTPase superfamily. Classic translation factor GTPase family. IF-2 subfamily.

It is found in the cytoplasm. Functionally, one of the essential components for the initiation of protein synthesis. Protects formylmethionyl-tRNA from spontaneous hydrolysis and promotes its binding to the 30S ribosomal subunits. Also involved in the hydrolysis of GTP during the formation of the 70S ribosomal complex. This is Translation initiation factor IF-2 from Pseudomonas aeruginosa (strain UCBPP-PA14).